Consider the following 193-residue polypeptide: Orotate phosphoribosyltransferase (193 aa).

114-122 (EDVITTGGS) provides a ligand contact to 5-phospho-alpha-D-ribose 1-diphosphate. Residues threonine 118 and arginine 146 each contribute to the orotate site.

This sequence belongs to the purine/pyrimidine phosphoribosyltransferase family. PyrE subfamily. Homodimer. The cofactor is Mg(2+).

It carries out the reaction orotidine 5'-phosphate + diphosphate = orotate + 5-phospho-alpha-D-ribose 1-diphosphate. It functions in the pathway pyrimidine metabolism; UMP biosynthesis via de novo pathway; UMP from orotate: step 1/2. Catalyzes the transfer of a ribosyl phosphate group from 5-phosphoribose 1-diphosphate to orotate, leading to the formation of orotidine monophosphate (OMP). The protein is Orotate phosphoribosyltransferase of Chlorobaculum parvum (strain DSM 263 / NCIMB 8327) (Chlorobium vibrioforme subsp. thiosulfatophilum).